We begin with the raw amino-acid sequence, 49 residues long: Large ribosomal subunit protein bL33 (49 aa).

It belongs to the bacterial ribosomal protein bL33 family.

The sequence is that of Large ribosomal subunit protein bL33 from Clostridium botulinum (strain Alaska E43 / Type E3).